We begin with the raw amino-acid sequence, 24 residues long: Ascaphin-5 (24 aa).

As to expression, expressed by the skin glands.

Its subcellular location is the secreted. Antimicrobial peptide. Synthetic peptide shows higher potency against Gram-negative bacteria than against Gram-positive bacteria. Has a very week hemolytic activity. The polypeptide is Ascaphin-5 (Ascaphus truei (Coastal tailed frog)).